The following is a 98-amino-acid chain: Small ribosomal subunit protein uS19c (98 aa).

It belongs to the universal ribosomal protein uS19 family.

It is found in the plastid. The protein localises to the chloroplast. Its function is as follows. Protein S19 forms a complex with S13 that binds strongly to the 16S ribosomal RNA. In Jasminum nudiflorum (Winter jasmine), this protein is Small ribosomal subunit protein uS19c.